The sequence spans 291 residues: UPF0276 protein VV1_0952 (291 aa).

Belongs to the UPF0276 family.

The protein is UPF0276 protein VV1_0952 of Vibrio vulnificus (strain CMCP6).